A 228-amino-acid chain; its full sequence is MRKGEVLKLGIVPYMEGKEIQLKAFERVKKGETDGILILLQHPPVYTIGVSGGFDENILVPLAELKKKAELYKVERGGKITFHGPGQIVAYPIFNLAKWQKDVHLFVYKLEETIIKLLEEYGIKAGRKPKYTGVWVGDEKICAIGIAVRRWITWHGIAFNVNTDLSYFGLINACGITEFGVTSMQKLGINEDIEKVKEKMVDKFSEVFGIHFSEITLDRLAVIDNAKA.

The 182-residue stretch at 31–212 (GETDGILILL…KFSEVFGIHF (182 aa)) folds into the BPL/LPL catalytic domain. Residues 76-83 (RGGKITFH), 143-145 (AIG), and 156-158 (GIA) contribute to the substrate site. Catalysis depends on Cys174, which acts as the Acyl-thioester intermediate.

It belongs to the LipB family.

It is found in the cytoplasm. It carries out the reaction octanoyl-[ACP] + L-lysyl-[protein] = N(6)-octanoyl-L-lysyl-[protein] + holo-[ACP] + H(+). Its pathway is protein modification; protein lipoylation via endogenous pathway; protein N(6)-(lipoyl)lysine from octanoyl-[acyl-carrier-protein]: step 1/2. In terms of biological role, catalyzes the transfer of endogenously produced octanoic acid from octanoyl-acyl-carrier-protein onto the lipoyl domains of lipoate-dependent enzymes. Lipoyl-ACP can also act as a substrate although octanoyl-ACP is likely to be the physiological substrate. In Thermoanaerobacter sp. (strain X514), this protein is Octanoyltransferase.